We begin with the raw amino-acid sequence, 203 residues long: Glutathione-specific gamma-glutamylcyclotransferase (203 aa).

Residue 12 to 17 (VFGYGS) coordinates substrate. Glu105 functions as the Proton acceptor in the catalytic mechanism.

Belongs to the gamma-glutamylcyclotransferase family. ChaC subfamily.

It localises to the cytoplasm. Its subcellular location is the nucleus. The enzyme catalyses glutathione = L-cysteinylglycine + 5-oxo-L-proline. Gamma-glutamylcyclotransferase acting specifically on glutathione, but not on other gamma-glutamyl peptides. Allows utilization of gluthathione through subsequent cleavage of the Cys-Gly dipeptide by Cys-Gly metallodipeptidase dug1. In Schizosaccharomyces pombe (strain 972 / ATCC 24843) (Fission yeast), this protein is Glutathione-specific gamma-glutamylcyclotransferase.